Here is a 225-residue protein sequence, read N- to C-terminus: Cytidylate kinase (225 aa).

Position 11–19 (11–19 (GPAGAGKGT)) interacts with ATP. A compositionally biased stretch (basic and acidic residues) spans 169 to 185 (MDRIKSRIEERDARDQS). The disordered stretch occupies residues 169-195 (MDRIKSRIEERDARDQSRATAPLAAAP).

It belongs to the cytidylate kinase family. Type 1 subfamily.

Its subcellular location is the cytoplasm. The catalysed reaction is CMP + ATP = CDP + ADP. The enzyme catalyses dCMP + ATP = dCDP + ADP. This Magnetococcus marinus (strain ATCC BAA-1437 / JCM 17883 / MC-1) protein is Cytidylate kinase.